A 583-amino-acid polypeptide reads, in one-letter code: Propane 2-monooxygenase operon transcriptional activator MimR (583 aa).

The 194-residue stretch at 320 to 513 (LAGQSSSFRR…LRHVLTETVR (194 aa)) folds into the Sigma-54 factor interaction domain. ATP contacts are provided by residues 349-356 (ERGSGRTY) and 395-404 (SADFAVIVSD).

In terms of biological role, acts as a transcriptional activator of the mimABCD operon encoding the propane 2-monooxygenase complex. The polypeptide is Propane 2-monooxygenase operon transcriptional activator MimR (Mycolicibacterium smegmatis (strain ATCC 700084 / mc(2)155) (Mycobacterium smegmatis)).